We begin with the raw amino-acid sequence, 588 residues long: L-fucose isomerase (588 aa).

Active-site proton acceptor residues include E335 and D359. The Mn(2+) site is built by E335, D359, and H525.

This sequence belongs to the L-fucose isomerase family. Requires Mn(2+) as cofactor.

It is found in the cytoplasm. It carries out the reaction L-fucose = L-fuculose. The protein operates within carbohydrate degradation; L-fucose degradation; L-lactaldehyde and glycerone phosphate from L-fucose: step 1/3. In terms of biological role, converts the aldose L-fucose into the corresponding ketose L-fuculose. The chain is L-fucose isomerase from Streptococcus pneumoniae (strain JJA).